The chain runs to 63 residues: Large ribosomal subunit protein bL28 (63 aa).

The protein belongs to the bacterial ribosomal protein bL28 family.

This Alkaliphilus metalliredigens (strain QYMF) protein is Large ribosomal subunit protein bL28.